The sequence spans 194 residues: MRTATITRTTKETTITISLNLDQQSGIQIATGIGFFDHMLDAFAKHGRFGLTVDAQGDLDVDPHHTIEDTGIVLGECFKQALGDKAGIERFRSAFVPMDESLARAVVDLSGRAYLVFDAELTNQRLGGFDTEVTEDFFQAVAFAGEFNLHASVLYGRNTHHKIEALFKALGRSLRAAVAINPEVQGIPSTKGVI.

The protein belongs to the imidazoleglycerol-phosphate dehydratase family.

The protein localises to the cytoplasm. The catalysed reaction is D-erythro-1-(imidazol-4-yl)glycerol 3-phosphate = 3-(imidazol-4-yl)-2-oxopropyl phosphate + H2O. It functions in the pathway amino-acid biosynthesis; L-histidine biosynthesis; L-histidine from 5-phospho-alpha-D-ribose 1-diphosphate: step 6/9. The polypeptide is Imidazoleglycerol-phosphate dehydratase (Lacticaseibacillus paracasei (strain ATCC 334 / BCRC 17002 / CCUG 31169 / CIP 107868 / KCTC 3260 / NRRL B-441) (Lactobacillus paracasei)).